The sequence spans 334 residues: MSRFLLPVSVVGTVIGGTVLLKDYVAGGACPSKATIPGKTVIVTGANTGIGKQTALELAKRGGNVILACRDMEKCEVAAKDIRGETLNPRVRAERLDLASLKSIREFARKVIKEEERVDILVNNAAVMRCPHWTTEDGFEMQFGVNYLGHFLLTNLLLDKLKASAPSRIINLSSLAHVAGHIDFEDLNWQMKKYDTKAAYCQSKLAVVLFTKELSHRLQGSGVTVNALHPGVARTELGRHTGMHNSAFSGFMLGPFFWLLFKSPQLAAQPSTYLAVAEELENVSGKYFDGLREKAPSPEAEDEEVARRLWTESARLVGLAMAHGSPGRGHAIPR.

Ser-2 bears the N-acetylserine mark. 45-51 contributes to the NADP(+) binding site; the sequence is GANTGIG. Ser-174 contributes to the substrate binding site. Tyr-200 acts as the Proton acceptor in catalysis.

It belongs to the short-chain dehydrogenases/reductases (SDR) family.

It is found in the mitochondrion inner membrane. The catalysed reaction is all-trans-retinol + NADP(+) = all-trans-retinal + NADPH + H(+). Its pathway is cofactor metabolism; retinol metabolism. Retinol dehydrogenase with a clear preference for NADP. Oxidizes all-trans-retinol, but seems to reduce all-trans-retinal with much higher efficiency. Has no activity towards steroid. The chain is Retinol dehydrogenase 13 (Rdh13) from Mus musculus (Mouse).